We begin with the raw amino-acid sequence, 502 residues long: Membrane protein insertase YidC (502 aa).

Transmembrane regions (helical) follow at residues Phe-12–Tyr-32, Leu-286–Tyr-306, Trp-312–Tyr-332, Leu-382–Val-402, Phe-409–Gly-429, and Ile-452–Trp-472.

It belongs to the OXA1/ALB3/YidC family. Type 1 subfamily. Interacts with the Sec translocase complex via SecD. Specifically interacts with transmembrane segments of nascent integral membrane proteins during membrane integration.

The protein localises to the cell membrane. Functionally, required for the insertion and/or proper folding and/or complex formation of integral membrane proteins into the membrane. Involved in integration of membrane proteins that insert both dependently and independently of the Sec translocase complex, as well as at least some lipoproteins. Aids folding of multispanning membrane proteins. This chain is Membrane protein insertase YidC, found in Aquifex aeolicus (strain VF5).